The chain runs to 104 residues: Integration host factor subunit beta (104 aa).

It belongs to the bacterial histone-like protein family. Heterodimer of an alpha and a beta chain.

In terms of biological role, this protein is one of the two subunits of integration host factor, a specific DNA-binding protein that functions in genetic recombination as well as in transcriptional and translational control. The polypeptide is Integration host factor subunit beta (Xylella fastidiosa (strain M23)).